The following is a 513-amino-acid chain: Maturase K (513 aa).

It belongs to the intron maturase 2 family. MatK subfamily.

The protein resides in the plastid. It is found in the chloroplast. Its function is as follows. Usually encoded in the trnK tRNA gene intron. Probably assists in splicing its own and other chloroplast group II introns. This Byblis liniflora (Carnivorous plant) protein is Maturase K.